The sequence spans 367 residues: Indole glucosinolate O-methyltransferase 5 (367 aa).

S-adenosyl-L-homocysteine contacts are provided by Gly209, Asp232, Asp252, Met253, and Lys266. The active-site Proton acceptor is His270.

This sequence belongs to the class I-like SAM-binding methyltransferase superfamily. Cation-independent O-methyltransferase family.

It participates in secondary metabolite biosynthesis. Functionally, involved in indole glucosinolate biosynthesis. Catalyzes methoxylation reactions of the glucosinolate indole ring. Converts the hydroxy intermediates 4-hydroxy-indol-3-yl-methylglucosinolate (4OH-I3M) and 1-hydroxy-indol-3-yl-methylglucosinolate (1OH-I3M) to 4-methoxy-indol-3-yl-methylglucosinolate (4MO-I3M) and 1-methoxy-indol-3-yl-methylglucosinolate, respectively. This chain is Indole glucosinolate O-methyltransferase 5, found in Arabidopsis thaliana (Mouse-ear cress).